The sequence spans 347 residues: Heme A synthase (347 aa).

Helical transmembrane passes span 14–34 (VKIWLCICCIGILVMVFIGGI), 96–116 (FHRLLGRIVGLVFLIPFLYFM), 129–149 (FILIAFLILVQGVMGWYMVKS), 162–182 (LAMHLLLALAIFYLLWKHFLL), 199–219 (VFYIIISLITIQITCGALVAG), 260–280 (FIHEVIALLILIIVVITLLVL), 287–307 (MYLLLALLLIQLTLGILTFIY), and 311–331 (IILASLHQVTAFILFASSIYL). Residue histidine 262 participates in heme binding. Histidine 317 serves as a coordination point for heme.

Belongs to the COX15/CtaA family. Type 2 subfamily. As to quaternary structure, interacts with CtaB. Heme b is required as a cofactor.

The protein resides in the cell membrane. It catalyses the reaction Fe(II)-heme o + 2 A + H2O = Fe(II)-heme a + 2 AH2. The protein operates within porphyrin-containing compound metabolism; heme A biosynthesis; heme A from heme O: step 1/1. Catalyzes the conversion of heme O to heme A by two successive hydroxylations of the methyl group at C8. The first hydroxylation forms heme I, the second hydroxylation results in an unstable dihydroxymethyl group, which spontaneously dehydrates, resulting in the formyl group of heme A. In Ehrlichia ruminantium (strain Welgevonden), this protein is Heme A synthase.